A 313-amino-acid chain; its full sequence is L-lactate dehydrogenase 1 (313 aa).

4 residues coordinate NAD(+): Val15, Asp36, Arg41, and Tyr66. Residues Gln83, Arg89, and 121 to 124 (NPVD) contribute to the substrate site. NAD(+) is bound by residues 119 to 121 (ASN) and Ser144. 149–152 (DTAR) lines the substrate pocket. 2 residues coordinate beta-D-fructose 1,6-bisphosphate: Arg154 and His169. His176 serves as the catalytic Proton acceptor. At Tyr218 the chain carries Phosphotyrosine. Residue Thr227 participates in substrate binding.

Belongs to the LDH/MDH superfamily. LDH family. Homotetramer.

It localises to the cytoplasm. The enzyme catalyses (S)-lactate + NAD(+) = pyruvate + NADH + H(+). The protein operates within fermentation; pyruvate fermentation to lactate; (S)-lactate from pyruvate: step 1/1. Its activity is regulated as follows. Allosterically activated by fructose 1,6-bisphosphate (FBP). Its function is as follows. Catalyzes the conversion of lactate to pyruvate. In Listeria innocua serovar 6a (strain ATCC BAA-680 / CLIP 11262), this protein is L-lactate dehydrogenase 1.